Here is a 552-residue protein sequence, read N- to C-terminus: Putative transport protein YPN_3727 (552 aa).

6 helical membrane passes run 1 to 21, 26 to 46, 65 to 85, 96 to 116, 119 to 139, and 158 to 178; these read MSAIALTVSMLALVAVLGLWI, IYGVGLGIGGVLFGGIIVGHF, FGLILFVYTIGIQVGPGFFSS, FAILMVVVGGLVTAIIHKLFA, LPIILGVFSGAVTNTPALGAA, and MGYAMAYPFGICGILLVMWLI. RCK C-terminal domains lie at 192-276 and 279-361; these read AFDS…VVGE and DVTL…IVGN. Transmembrane regions (helical) follow at residues 371-391, 393-413, 439-459, 464-484, 493-513, and 530-550; these read MLPVFIGVGLGVLLGSIPLFV, GFPAALRLGLAGGPLVVALIL, IVLFLSVVGLKSGGDFINTLV, LAWIGYGAMITGIPLLTVGIL, YLTLCGMLAGSMTDPPALAFA, and VYPLAMFLRIMSPQILAVLFW.

This sequence belongs to the AAE transporter (TC 2.A.81) family. YidE subfamily.

It localises to the cell membrane. The protein is Putative transport protein YPN_3727 of Yersinia pestis bv. Antiqua (strain Nepal516).